Consider the following 529-residue polypeptide: Serine hydroxymethyltransferase 3, chloroplastic (529 aa).

A chloroplast-targeting transit peptide spans 1 to 60 (MQACCGGNSMASLQQPGRVQGSVFPPIMPPVTKFSQQLKFNISKPFRSSFLKRNLVSEMR). N6-(pyridoxal phosphate)lysine is present on Lys-314.

The protein belongs to the SHMT family. In terms of assembly, homotetramer. Pyridoxal 5'-phosphate serves as cofactor.

It is found in the plastid. The protein localises to the chloroplast. The enzyme catalyses (6R)-5,10-methylene-5,6,7,8-tetrahydrofolate + glycine + H2O = (6S)-5,6,7,8-tetrahydrofolate + L-serine. The protein operates within one-carbon metabolism; tetrahydrofolate interconversion. Its activity is regulated as follows. Inhibited by 5-CH3-H4PteGlu1/5 and 5-HCO-H4PteGlu1/5 in vitro. Functionally, catalyzes the interconversion of serine and glycine and directs the hydroxymethyl moiety of serine into the metabolic network of H4PteGlu(n)-bound one-carbon units. This chain is Serine hydroxymethyltransferase 3, chloroplastic, found in Arabidopsis thaliana (Mouse-ear cress).